We begin with the raw amino-acid sequence, 244 residues long: ATP synthase subunit 4, mitochondrial (244 aa).

The transit peptide at 1–35 (MSMSMGVRGLALRSVSKTLFSQGVRCPSMVIGARY) directs the protein to the mitochondrion. Serine 144 carries the post-translational modification Phosphoserine.

This sequence belongs to the eukaryotic ATPase B chain family. As to quaternary structure, F-type ATPases have 2 components, CF(1) - the catalytic core - and CF(0) - the membrane proton channel. In yeast, the dimeric form of ATP synthase consists of 17 polypeptides: alpha, beta, gamma, delta, epsilon, 4 (B), 5 (OSCP), 6 (A), 8, 9 (C), d, E (Tim11), f, g, h, i/j and k.

It localises to the mitochondrion. The protein resides in the mitochondrion inner membrane. Its function is as follows. Mitochondrial membrane ATP synthase (F(1)F(0) ATP synthase or Complex V) produces ATP from ADP in the presence of a proton gradient across the membrane which is generated by electron transport complexes of the respiratory chain. F-type ATPases consist of two structural domains, F(1) - containing the extramembraneous catalytic core, and F(0) - containing the membrane proton channel, linked together by a central stalk and a peripheral stalk. During catalysis, ATP synthesis in the catalytic domain of F(1) is coupled via a rotary mechanism of the central stalk subunits to proton translocation. Part of the complex F(0) domain and the peripheric stalk, which acts as a stator to hold the catalytic alpha(3)beta(3) subcomplex and subunit a/ATP6 static relative to the rotary elements. This Saccharomyces cerevisiae (strain ATCC 204508 / S288c) (Baker's yeast) protein is ATP synthase subunit 4, mitochondrial (ATP4).